A 243-amino-acid chain; its full sequence is Peptidyl-tRNA hydrolase (243 aa).

Tyrosine 14 serves as a coordination point for tRNA. Histidine 19 (proton acceptor) is an active-site residue. Phenylalanine 64, asparagine 66, and asparagine 112 together coordinate tRNA. Basic and acidic residues predominate over residues 190–205; sequence KAEEEKPAKEMKDAGK. The disordered stretch occupies residues 190–243; sequence KAEEEKPAKEMKDAGKKPASQSHIHQARNHNQPKLPATGPMADMLKKMFGKKGD. Positions 208–221 are enriched in polar residues; sequence ASQSHIHQARNHNQ.

This sequence belongs to the PTH family. As to quaternary structure, monomer.

It localises to the cytoplasm. The catalysed reaction is an N-acyl-L-alpha-aminoacyl-tRNA + H2O = an N-acyl-L-amino acid + a tRNA + H(+). Functionally, hydrolyzes ribosome-free peptidyl-tRNAs (with 1 or more amino acids incorporated), which drop off the ribosome during protein synthesis, or as a result of ribosome stalling. Catalyzes the release of premature peptidyl moieties from peptidyl-tRNA molecules trapped in stalled 50S ribosomal subunits, and thus maintains levels of free tRNAs and 50S ribosomes. This is Peptidyl-tRNA hydrolase from Rhizobium johnstonii (strain DSM 114642 / LMG 32736 / 3841) (Rhizobium leguminosarum bv. viciae).